Here is a 131-residue protein sequence, read N- to C-terminus: Global transcriptional regulator Spx (131 aa).

An intrachain disulfide couples cysteine 10 to cysteine 13.

The protein belongs to the ArsC family. Spx subfamily. Interacts with the C-terminal domain of the alpha subunit of the RNAP.

It localises to the cytoplasm. Functionally, global transcriptional regulator that plays a key role in stress response and exerts either positive or negative regulation of genes. Acts by interacting with the C-terminal domain of the alpha subunit of the RNA polymerase (RNAP). This interaction can enhance binding of RNAP to the promoter region of target genes and stimulate their transcription, or block interaction of RNAP with activator. In Staphylococcus epidermidis (strain ATCC 35984 / DSM 28319 / BCRC 17069 / CCUG 31568 / BM 3577 / RP62A), this protein is Global transcriptional regulator Spx.